The primary structure comprises 1896 residues: von Willebrand factor A domain-containing protein 8 (1896 aa).

The transit peptide at 1-18 (MHSRILFKGTAAAVAARR) directs the protein to the mitochondrion. 439 to 446 (GAKGCGKS) contributes to the ATP binding site. The disordered stretch occupies residues 1536–1564 (GLDVSSPKHGKIDAKNAPHVGGNQWAGGT). One can recognise a VWFA domain in the interval 1705-1887 (RLRVLADVSG…KEIPQILQQI (183 aa)).

As to quaternary structure, monomer.

Its subcellular location is the mitochondrion. In terms of biological role, exhibits ATPase activity in vitro. This is von Willebrand factor A domain-containing protein 8 (vwa8) from Danio rerio (Zebrafish).